The chain runs to 403 residues: Putative transport protein TP_0553 (403 aa).

8 helical membrane-spanning segments follow: residues 10–30, 31–51, 92–112, 202–222, 243–263, 271–291, 293–313, and 350–370; these read ISLF…FVPY, LTVL…YRAL, AAVF…FIAI, LYFF…ALPL, KGLF…YGIF, LAML…CVWL, VGIS…LFVA, and TFGF…FTVI.

Belongs to the autoinducer-2 exporter (AI-2E) (TC 2.A.86) family.

The protein localises to the cell membrane. This Treponema pallidum (strain Nichols) protein is Putative transport protein TP_0553.